We begin with the raw amino-acid sequence, 330 residues long: ADP-L-glycero-D-manno-heptose-6-epimerase (330 aa).

NADP(+) contacts are provided by residues 10-11 (FI), 31-32 (DD), lysine 38, lysine 53, 74-78 (QGACS), and asparagine 91. Tyrosine 138 functions as the Proton acceptor in the catalytic mechanism. Residue lysine 142 coordinates NADP(+). Residue asparagine 167 coordinates substrate. Residues valine 168 and lysine 176 each coordinate NADP(+). Lysine 176 serves as the catalytic Proton acceptor. Residues arginine 178, histidine 185, 199–202 (FAGW), arginine 212, and tyrosine 291 contribute to the substrate site.

It belongs to the NAD(P)-dependent epimerase/dehydratase family. HldD subfamily. In terms of assembly, homopentamer. It depends on NADP(+) as a cofactor.

The enzyme catalyses ADP-D-glycero-beta-D-manno-heptose = ADP-L-glycero-beta-D-manno-heptose. It functions in the pathway nucleotide-sugar biosynthesis; ADP-L-glycero-beta-D-manno-heptose biosynthesis; ADP-L-glycero-beta-D-manno-heptose from D-glycero-beta-D-manno-heptose 7-phosphate: step 4/4. Its function is as follows. Catalyzes the interconversion between ADP-D-glycero-beta-D-manno-heptose and ADP-L-glycero-beta-D-manno-heptose via an epimerization at carbon 6 of the heptose. This is ADP-L-glycero-D-manno-heptose-6-epimerase from Bordetella petrii (strain ATCC BAA-461 / DSM 12804 / CCUG 43448).